We begin with the raw amino-acid sequence, 180 residues long: 3-hydroxyanthranilate 3,4-dioxygenase (180 aa).

R46 is a binding site for O2. Fe cation is bound by residues H50, E56, and H94. E56 provides a ligand contact to substrate. The substrate site is built by R98 and E109. C124, C127, C161, and C164 together coordinate Fe cation.

It belongs to the 3-HAO family. As to quaternary structure, homodimer. The cofactor is Fe(2+).

It catalyses the reaction 3-hydroxyanthranilate + O2 = (2Z,4Z)-2-amino-3-carboxymuconate 6-semialdehyde. It functions in the pathway cofactor biosynthesis; NAD(+) biosynthesis; quinolinate from L-kynurenine: step 3/3. In terms of biological role, catalyzes the oxidative ring opening of 3-hydroxyanthranilate to 2-amino-3-carboxymuconate semialdehyde, which spontaneously cyclizes to quinolinate. The protein is 3-hydroxyanthranilate 3,4-dioxygenase of Jannaschia sp. (strain CCS1).